The chain runs to 102 residues: ATP-dependent Clp protease adapter protein ClpS (102 aa).

Belongs to the ClpS family. Binds to the N-terminal domain of the chaperone ClpA.

Its function is as follows. Involved in the modulation of the specificity of the ClpAP-mediated ATP-dependent protein degradation. The sequence is that of ATP-dependent Clp protease adapter protein ClpS from Shewanella loihica (strain ATCC BAA-1088 / PV-4).